The following is a 293-amino-acid chain: MKI67 FHA domain-interacting nucleolar phosphoprotein (293 aa).

At Ala2 the chain carries N-acetylalanine. Residue Lys38 forms a Glycyl lysine isopeptide (Lys-Gly) (interchain with G-Cter in SUMO2) linkage. The region spanning 45–123 is the RRM domain; sequence GVVYVRHLPN…RLLECHFMPP (79 aa). An Omega-N-methylarginine; by PRMT1 and PRMT8 modification is found at Arg114. Lys139 participates in a covalent cross-link: Glycyl lysine isopeptide (Lys-Gly) (interchain with G-Cter in SUMO2). The residue at position 145 (Ser145) is a Phosphoserine. Residues Lys179 and Lys192 each participate in a glycyl lysine isopeptide (Lys-Gly) (interchain with G-Cter in SUMO2) cross-link. Polar residues predominate over residues 197–207; that stretch reads SKTNRQTSTKG. Residues 197 to 239 form a disordered region; it reads SKTNRQTSTKGQVLRKKKKKVSGTLDTPEKTVDSQGPTPVCTP. The residue at position 218 (Ser218) is a Phosphoserine. Phosphothreonine is present on Thr223. Residues 226 to 269 form an interaction with MKI67 region; sequence KTVDSQGPTPVCTPTFLERRKSQVAELNDDDKDDEIVFKQPISC. Position 230 is a phosphoserine (Ser230). Thr234 and Thr238 each carry phosphothreonine. Omega-N-methylated arginine; by PRMT1 and PRMT8 occurs at positions 244 and 245. At Ser247 the chain carries Phosphoserine. Residue Lys271 forms a Glycyl lysine isopeptide (Lys-Gly) (interchain with G-Cter in SUMO1); alternate linkage. Residue Lys271 forms a Glycyl lysine isopeptide (Lys-Gly) (interchain with G-Cter in SUMO2); alternate linkage. A disordered region spans residues 271 to 293; it reads KEEIQETQTPTHSRKKRRRSSNQ. Phosphothreonine is present on Thr279. Basic residues predominate over residues 282–293; the sequence is HSRKKRRRSSNQ. An Omega-N-methylarginine; by PRMT1 and PRMT8 modification is found at Arg284.

As to quaternary structure, binds to the FHA domain of MKI67; this interaction is enhanced in mitosis. Post-translationally, sequentially phosphorylated on Thr-238, Thr-234 and Ser-230. Thr-234 is phosphorylated only when Thr-238 is phosphorylated. Likewise, phosphorylation at Ser-230 requires that Thr-234 and Thr-238 are phosphorylated. Phosphorylation enhances MKI67 binding.

Its subcellular location is the nucleus. The protein localises to the nucleolus. It localises to the chromosome. The protein is MKI67 FHA domain-interacting nucleolar phosphoprotein (NIFK) of Homo sapiens (Human).